The following is a 278-amino-acid chain: Phosphatidylglycerol--prolipoprotein diacylglyceryl transferase (278 aa).

4 helical membrane passes run 19–39, 49–69, 86–106, and 112–132; these read WYGI…INEG, FIDF…IYYV, IWNG…VLLI, and MLPP…AQVI. R134 provides a ligand contact to a 1,2-diacyl-sn-glycero-3-phospho-(1'-sn-glycerol). A run of 3 helical transmembrane segments spans residues 174–194, 204–224, and 235–255; these read QPTY…ILSL, GEIF…VEGM, and IRVS…LWIY.

It belongs to the Lgt family.

It localises to the cell membrane. It catalyses the reaction L-cysteinyl-[prolipoprotein] + a 1,2-diacyl-sn-glycero-3-phospho-(1'-sn-glycerol) = an S-1,2-diacyl-sn-glyceryl-L-cysteinyl-[prolipoprotein] + sn-glycerol 1-phosphate + H(+). The protein operates within protein modification; lipoprotein biosynthesis (diacylglyceryl transfer). Functionally, catalyzes the transfer of the diacylglyceryl group from phosphatidylglycerol to the sulfhydryl group of the N-terminal cysteine of a prolipoprotein, the first step in the formation of mature lipoproteins. The chain is Phosphatidylglycerol--prolipoprotein diacylglyceryl transferase from Lactobacillus johnsonii (strain CNCM I-12250 / La1 / NCC 533).